The chain runs to 835 residues: Transcription intermediary factor 1-beta (835 aa).

Over residues M1 to S19 the composition is skewed to low complexity. Positions M1 to S49 are disordered. A2 is subject to N-acetylalanine. S19 and S26 each carry phosphoserine. K31 is covalently cross-linked (Glycyl lysine isopeptide (Lys-Gly) (interchain with G-Cter in SUMO2)). Low complexity predominate over residues A35–S49. S50 is subject to Phosphoserine. The RING-type zinc finger occupies C65–K121. Positions C65–L376 are RBCC domain. K127 participates in a covalent cross-link: Glycyl lysine isopeptide (Lys-Gly) (interchain with G-Cter in SUMO2). At S138 the chain carries Phosphoserine. The B box-type 1; atypical zinc-finger motif lies at D148–T195. Residues C153, C156, C177, and H181 each contribute to the Zn(2+) site. A Glycyl lysine isopeptide (Lys-Gly) (interchain with G-Cter in SUMO2) cross-link involves residue K199. The B box-type 2 zinc-finger motif lies at E204 to L245. Zn(2+)-binding residues include C209, H212, C232, and H237. The tract at residues E246–L376 is leucine zipper alpha helical coiled-coil region. Positions D247–L376 are interaction with MAGEC2. Glycyl lysine isopeptide (Lys-Gly) (interchain with G-Cter in SUMO2) cross-links involve residues K254 and K261. K266 carries the post-translational modification N6-acetyllysine. Residue K272 forms a Glycyl lysine isopeptide (Lys-Gly) (interchain with G-Cter in SUMO2) linkage. The residue at position 304 (K304) is an N6-acetyllysine; alternate. K304 is covalently cross-linked (Glycyl lysine isopeptide (Lys-Gly) (interchain with G-Cter in SUMO2); alternate). K319 participates in a covalent cross-link: Glycyl lysine isopeptide (Lys-Gly) (interchain with G-Cter in SUMO2). At K340 the chain carries N6-acetyllysine. A Glycyl lysine isopeptide (Lys-Gly) (interchain with G-Cter in SUMO2) cross-link involves residue K366. An involved in binding PPP1CA region spans residues K366–F370. K377 carries the N6-acetyllysine; alternate modification. K377 is covalently cross-linked (Glycyl lysine isopeptide (Lys-Gly) (interchain with G-Cter in SUMO2); alternate). A Glycyl lysine isopeptide (Lys-Gly) (interchain with G-Cter in SUMO1); alternate cross-link involves residue K377. K407 is covalently cross-linked (Glycyl lysine isopeptide (Lys-Gly) (interchain with G-Cter in SUMO2)). The interval E411–G480 is disordered. S417 carries the post-translational modification Phosphoserine. K434 is covalently cross-linked (Glycyl lysine isopeptide (Lys-Gly) (interchain with G-Cter in SUMO2)). Over residues K434–M443 the composition is skewed to polar residues. Residues S437, S439, and S453 each carry the phosphoserine modification. K469 is covalently cross-linked (Glycyl lysine isopeptide (Lys-Gly) (interchain with G-Cter in SUMO2); alternate). Residue K469 forms a Glycyl lysine isopeptide (Lys-Gly) (interchain with G-Cter in SUMO1); alternate linkage. R470 carries the citrulline modification. At S471 the chain carries Phosphoserine. Position 472 is a citrulline (R472). 3 positions are modified to phosphoserine: S473, S479, and S489. The HP1 box stretch occupies residues G476–T513. Positions L481–D494 match the PxVxL motif motif. A Phosphothreonine modification is found at T498. S501 carries the post-translational modification Phosphoserine. K507 participates in a covalent cross-link: Glycyl lysine isopeptide (Lys-Gly) (interchain with G-Cter in SUMO2). T541 bears the Phosphothreonine mark. Residue K554 forms a Glycyl lysine isopeptide (Lys-Gly) (interchain with G-Cter in SUMO2); alternate linkage. Residue K554 forms a Glycyl lysine isopeptide (Lys-Gly) (interchain with G-Cter in SUMO); alternate linkage. A Glycyl lysine isopeptide (Lys-Gly) (interchain with G-Cter in SUMO2) cross-link involves residue K575. The interval G584–P618 is disordered. A Phosphoserine modification is found at S594. The PHD-type zinc finger occupies A625–L672. A Glycyl lysine isopeptide (Lys-Gly) (interchain with G-Cter in SUMO) cross-link involves residue K676. Residues S683, S689, and S697 each carry the phosphoserine modification. In terms of domain architecture, Bromo spans K695–A799. K750 participates in a covalent cross-link: Glycyl lysine isopeptide (Lys-Gly) (interchain with G-Cter in SUMO2); alternate. A Glycyl lysine isopeptide (Lys-Gly) (interchain with G-Cter in SUMO1); alternate cross-link involves residue K750. A Glycyl lysine isopeptide (Lys-Gly) (interchain with G-Cter in SUMO); alternate cross-link involves residue K750. S752 carries the post-translational modification Phosphoserine. Y755 carries the post-translational modification Phosphotyrosine. Phosphoserine is present on S757. Residues K770, K774, and K779 each carry the N6-acetyllysine; alternate modification. Residues K770, K774, and K779 each participate in a glycyl lysine isopeptide (Lys-Gly) (interchain with G-Cter in SUMO2); alternate cross-link. Residue K779 forms a Glycyl lysine isopeptide (Lys-Gly) (interchain with G-Cter in SUMO1); alternate linkage. A Phosphoserine modification is found at S784. Residue K804 forms a Glycyl lysine isopeptide (Lys-Gly) (interchain with G-Cter in SUMO2); alternate linkage. K804 is covalently cross-linked (Glycyl lysine isopeptide (Lys-Gly) (interchain with G-Cter in SUMO); alternate). The disordered stretch occupies residues M815–P835. Phosphoserine; by ATM and ATR and dsDNA kinase is present on S824.

It belongs to the TRIM/RBCC family. As to quaternary structure, interacts with SETX. Oligomer; the RBCC domain homotrimerizes and interacts with one molecule of KRAB to form the KRAB-KAP1 corepressor complex. Binding to a KRAB domain is an absolute requirement for silencing gene expression. Interacts with CEBPB and NR3C1. Interacts with a number of KRAB-ZFP proteins including ZNF10, ZFP53, ZFP68, ZNF382 and ZNF256. Interacts with NCOR1, NR3C1 and CHD3. Interacts with CEBPB (via the RING-type and PHD-type zinc fingers). Component of a ternary complex that includes TRIM28, a HP1 protein (CBX1, CBX3 OR CBX5), a KRAB domain-containing protein, and DNA. Interacts with CBX5 (via the PxVxL motif); the interaction occurs in interphase nuclei and competes for binding POGZ. Interacts with POGZ; the interaction competes for interaction with CBX5. Interacts with SETDB1; the interaction is enhanced by KAP1 sumoylation, stimulates SETDB1 histone methyltransferase activity and gene silencing. Interacts (via the PHD-type zinc finger) with UBE2I; the interaction is required for sumoylation and repressor activity. Component of the TRIM28/KAP1-ERBB4-MDM2 complex involved in connecting growth factor and DNA damage responses. Interacts directly with ERBB4; the interaction represses ERBB4-mediated transcription activity. Interacts with MDM2; the interaction contributes to p53/TP53 inactivation. Component of the TRIM28/KAP1-MDM2-p53/TP53; involved in regulating p53/TP53 stabilization and activity. Interacts (via the leucine zipper alpha helical coiled-coil) with E2F1 (central region); the interaction inhibits E2F1 acetylation and transcriptional activity. Interacts with PPP1CA; the interaction dephosphorylates TRIM28 at Ser-824 and forms a complex at the p21 promoter site. Interacts with PPP1CB; the interaction is weak but is increased on dephosphorylation at Ser-824. Interacts with FES/FPS. Interacts with SMARCAD1. Interacts with, and sumoylates IRF7. Interacts with MAGEC2. Part of a complex composed of TRIM28, HDAC1, HDAC2 and EHMT2. Interacts with AICDA. Interacts (via the RBCC domain) with KOX1 (via the KRAB domain), ZNF268 (via the KRAB domain) and ZNF300 (via the KRAB domain); the interactions increase KOX1, ZNF268 and ZNF300 nuclear localization activities. The large PER complex involved in the histone methylation is composed of at least PER2, CBX3, TRIM28, SUV39H1 and/or SUV39H2; CBX3 mediates the formation of the complex. Interacts with isoform 2 of ZFP90. Forms a complex with FOXP3 in the presence of isoform 2 of ZFP90. Interacts with NR4A3; the interactions potentiates NR4A3 activity on NurRE promoter. Interacts (unphosphorylated or phosphorylated form) with ZBTB1 (via BTB domain). Probably part of a corepressor complex containing ZNF304, TRIM28, SETDB1 and DNMT1. Interacts with ATRX. Forms a complex with ATRX, SETDB1 and ZNF274. Interacts with ZFP568; the interaction mediates ZFP568 transcriptional repression activity. Interacts with RRP1B. Interacts with CRY1. Interacts with ZNF263; recruited to the SIX3 promoter along with other proteins involved in chromatin modification and transcriptional corepression where it contributes to transcriptional repression. Interacts with CYREN (via XLF motif). Interacts with TRIM17; this interaction prevents TRIM28 activity. Interacts with ZNF746. Interacts with PHF13. Interacts with ZNF354C. Interacts with ZNF432; the interaction is independent of PARP1. In terms of assembly, (Microbial infection) Interacts with herpes virus 8 protein LANA1; this interaction facilitates establishment of viral latency. In terms of processing, ATM-induced phosphorylation on Ser-824 represses sumoylation leading to the de-repression of expression of a subset of genes involved in cell cycle control and apoptosis in response to genotoxic stress. Dephosphorylation by the phosphatases, PPP1CA and PP1CB forms, allows sumoylation and expression of TRIM28 target genes. Post-translationally, sumoylation/desumoylation events regulate TRIM28-mediated transcriptional repression. Sumoylation is required for interaction with CHD3 and SETDB1 and the corepressor activity. Represses and is repressed by Ser-824 phosphorylation. Enhances the TRIM28 corepressor activity, inhibiting transcriptional activity of a number of genes including GADD45A and CDKN1A/p21. Lys-554, Lys-779 and Lys-804 are the major sites of sumoylation. In response to Dox-induced DNA damage, enhanced phosphorylation on Ser-824 prevents sumoylation and allows de-repression of CDKN1A/p21. Auto-ubiquitinated; enhanced by MAGEA2 and MAGEC2. In terms of processing, citrullinated by PADI4. Post-translationally, ADP-ribosylated by SIRT6, promoting TRIM28/KAP1 interaction with CBX5, thereby contributing to the packaging of LINE-1 retrotransposon elements into transcriptionally repressive heterochromatin. As to expression, expressed in all tissues tested including spleen, thymus, prostate, testis, ovary, small intestine, colon and peripheral blood leukocytes.

The protein resides in the nucleus. It catalyses the reaction S-ubiquitinyl-[E2 ubiquitin-conjugating enzyme]-L-cysteine + [acceptor protein]-L-lysine = [E2 ubiquitin-conjugating enzyme]-L-cysteine + N(6)-ubiquitinyl-[acceptor protein]-L-lysine.. It functions in the pathway protein modification; protein sumoylation. Nuclear corepressor for KRAB domain-containing zinc finger proteins (KRAB-ZFPs). Mediates gene silencing by recruiting CHD3, a subunit of the nucleosome remodeling and deacetylation (NuRD) complex, and SETDB1 (which specifically methylates histone H3 at 'Lys-9' (H3K9me)) to the promoter regions of KRAB target genes. Enhances transcriptional repression by coordinating the increase in H3K9me, the decrease in histone H3 'Lys-9 and 'Lys-14' acetylation (H3K9ac and H3K14ac, respectively) and the disposition of HP1 proteins to silence gene expression. Recruitment of SETDB1 induces heterochromatinization. May play a role as a coactivator for CEBPB and NR3C1 in the transcriptional activation of ORM1. Also a corepressor for ERBB4. Inhibits E2F1 activity by stimulating E2F1-HDAC1 complex formation and inhibiting E2F1 acetylation. May serve as a partial backup to prevent E2F1-mediated apoptosis in the absence of RB1. Important regulator of CDKN1A/p21(CIP1). Has E3 SUMO-protein ligase activity toward itself via its PHD-type zinc finger. Also specifically sumoylates IRF7, thereby inhibiting its transactivation activity. Ubiquitinates p53/TP53 leading to its proteasomal degradation; the function is enhanced by MAGEC2 and MAGEA2, and possibly MAGEA3 and MAGEA6. Mediates the nuclear localization of KOX1, ZNF268 and ZNF300 transcription factors. In association with isoform 2 of ZFP90, is required for the transcriptional repressor activity of FOXP3 and the suppressive function of regulatory T-cells (Treg). Probably forms a corepressor complex required for activated KRAS-mediated promoter hypermethylation and transcriptional silencing of tumor suppressor genes (TSGs) or other tumor-related genes in colorectal cancer (CRC) cells. Required to maintain a transcriptionally repressive state of genes in undifferentiated embryonic stem cells (ESCs). In ESCs, in collaboration with SETDB1, is also required for H3K9me3 and silencing of endogenous and introduced retroviruses in a DNA-methylation independent-pathway. Associates at promoter regions of tumor suppressor genes (TSGs) leading to their gene silencing. The SETDB1-TRIM28-ZNF274 complex may play a role in recruiting ATRX to the 3'-exons of zinc-finger coding genes with atypical chromatin signatures to establish or maintain/protect H3K9me3 at these transcriptionally active regions. Functionally, (Microbial infection) Plays a critical role in the shutdown of lytic gene expression during the early stage of herpes virus 8 primary infection. This inhibition is mediated through interaction with herpes virus 8 protein LANA1. The polypeptide is Transcription intermediary factor 1-beta (Homo sapiens (Human)).